The chain runs to 724 residues: Degenerin mec-10 (724 aa).

At 1–125 the chain is on the cytoplasmic side; it reads MNRGPPNPRM…GQAPNSLYRA (125 aa). A helical membrane pass occupies residues 126–146; the sequence is VWVFLLLICAIQFINQAVAVI. The Extracellular portion of the chain corresponds to 147-684; sequence QKYQKMDKIT…FGGHLGLWSG (538 aa). N-linked (GlcNAc...) asparagine glycans are attached at residues Asn294, Asn370, Asn463, Asn605, and Asn624. A helical transmembrane segment spans residues 685-705; it reads VSVMTCCEFVCLVLELLYMAV. Residues 706–724 are Cytoplasmic-facing; sequence THHITQERIRRRENAANEF.

The protein belongs to the amiloride-sensitive sodium channel (TC 1.A.6) family. In terms of assembly, the channel is probably composed of at least the mec-2, mec-4, mec-6 and mec-10 subunits.

Its subcellular location is the cell membrane. Amiloride-sensitive sodium channel subunit required for mechanosensory transduction (touch sensitivity). Negatively regulates the turning step of male mating behavior. The sequence is that of Degenerin mec-10 from Caenorhabditis briggsae.